A 507-amino-acid chain; its full sequence is MGAPRSLLLALAAGLAVARPPNIVLIFADDLGYGDLGCYGHPSSTTPNLDQLAAGGLRFTDFYVPVSLCTPSRAALLTGRLPVRMGMYPGVLVPSSRGGLPLEEVTVAEVLAARGYLTGMAGKWHLGVGPEGAFLPPHQGFHRFLGIPYSHDQGPCQNLTCFPPATPCDGGCDQGLVPIPLLANLSVEAQPPWLPGLEARYMAFAHDLMADAQRQDRPFFLYYASHHTHYPQFSGQSFAERSGRGPFGDSLMELDAAVGTLMTAIGDLGLLEETLVIFTADNGPETMRMSRGGCSGLLRCGKGTTYEGGVREPALAFWPGHIAPGVTHELASSLDLLPTLAALAGAPLPNVTLDGFDLSPLLLGTGKSPRQSLFFYPSYPDEVRGVFAVRTGKYKAHFFTQGSAHSDTTADPACHASSSLTAHEPPLLYDLSKDPGENYNLLGGVAGATPEVLQALKQLQLLKAQLDAAVTFGPSQVARGEDPALQICCHPGCTPRPACCHCPDPHA.

The N-terminal stretch at 1–18 is a signal peptide; the sequence is MGAPRSLLLALAAGLAVA. Residues Asp29, Asp30, and Cys69 each contribute to the Ca(2+) site. Cys69 (nucleophile) is an active-site residue. The residue at position 69 (Cys69) is a 3-oxoalanine (Cys). Lys123 is a substrate binding site. His125 is a catalytic residue. Position 150 (Ser150) interacts with substrate. 2 disulfide bridges follow: Cys156–Cys172 and Cys161–Cys168. N-linked (GlcNAc...) asparagine glycosylation is present at Asn158. N-linked (GlcNAc...) asparagine glycosylation is present at Asn184. His229 contacts substrate. 2 residues coordinate Ca(2+): Asp281 and Asn282. Intrachain disulfides connect Cys300–Cys414, Cys488–Cys500, Cys489–Cys502, and Cys493–Cys499. Residue Lys302 participates in substrate binding. Asn350 is a glycosylation site (N-linked (GlcNAc...) asparagine).

Belongs to the sulfatase family. Homodimer at neutral pH and homooctamer at acidic pH. Exists both as a single chain of 58 kDa (component A) or as a chain of 50 kDa (component B) linked by disulfide bond(s) to a 7 kDa chain (component C). Interacts with SUMF1. Ca(2+) serves as cofactor. Post-translationally, the conversion to 3-oxoalanine (also known as C-formylglycine, FGly), of a serine or cysteine residue in prokaryotes and of a cysteine residue in eukaryotes, is critical for catalytic activity. This post-translational modification is severely defective in multiple sulfatase deficiency (MSD).

Its subcellular location is the endoplasmic reticulum. It is found in the lysosome. It carries out the reaction an N-acyl-1-beta-D-(3-O-sulfo)-galactosyl-sphing-4-enine + H2O = a beta-D-galactosyl-(1&lt;-&gt;1')-N-acylsphing-4-enine + sulfate + H(+). Inhibited by phosphate. The phosphate forms a covalent bond with the active site 3-oxoalanine. Functionally, hydrolyzes cerebroside sulfate. This chain is Arylsulfatase A (ARSA), found in Homo sapiens (Human).